The primary structure comprises 527 residues: Probable protein kinase UbiB (527 aa).

One can recognise a Protein kinase domain in the interval 123–527; it reads EFNETALASA…AIWLLIYLLS (405 aa). ATP is bound by residues 129-137 and Lys-161; that span reads LASASIAQV. The Proton acceptor role is filled by Asp-296. A helical transmembrane segment spans residues 506 to 526; that stretch reads FTSFILGLCTGLAIWLLIYLL.

The protein belongs to the ABC1 family. UbiB subfamily.

Its subcellular location is the cell inner membrane. Its pathway is cofactor biosynthesis; ubiquinone biosynthesis [regulation]. Is probably a protein kinase regulator of UbiI activity which is involved in aerobic coenzyme Q (ubiquinone) biosynthesis. The chain is Probable protein kinase UbiB from Pasteurella multocida (strain Pm70).